The sequence spans 356 residues: Phosphoribosyl pyrophosphate synthase-associated protein 1 (356 aa).

Met1 bears the N-acetylmethionine mark. A phosphoserine mark is found at Ser177 and Ser215.

It belongs to the ribose-phosphate pyrophosphokinase family. In terms of assembly, binds to PRPS1 and PRPS2.

Functionally, seems to play a negative regulatory role in 5-phosphoribose 1-diphosphate synthesis. The chain is Phosphoribosyl pyrophosphate synthase-associated protein 1 (PRPSAP1) from Bos taurus (Bovine).